The chain runs to 400 residues: Chalcone synthase WHP1 (400 aa).

Residue C167 is part of the active site.

The protein belongs to the thiolase-like superfamily. Chalcone/stilbene synthases family.

It catalyses the reaction (E)-4-coumaroyl-CoA + 3 malonyl-CoA + 3 H(+) = 2',4,4',6'-tetrahydroxychalcone + 3 CO2 + 4 CoA. It functions in the pathway secondary metabolite biosynthesis; flavonoid biosynthesis. In terms of biological role, the primary product of this enzyme is 4,2',4',6'-tetrahydroxychalcone (also termed naringenin-chalcone or chalcone) which can under specific conditions spontaneously isomerize into naringenin. This Zea mays (Maize) protein is Chalcone synthase WHP1 (WHP1).